The sequence spans 1117 residues: Sodium-driven chloride bicarbonate exchanger (1117 aa).

Disordered regions lie at residues 1 to 23 (MEIK…EEAV) and 58 to 97 (GRKS…TPSQ). The Cytoplasmic segment spans residues 1-508 (MEIKDQGAQM…DFRDAFSLQC (508 aa)). Residues 59-76 (RKSHRRHRHRGHKHRKRD) show a composition bias toward basic residues. Phosphoserine is present on Ser89. A Phosphothreonine modification is found at Thr94. Ser275 is subject to Phosphoserine. Disordered regions lie at residues 282–309 (DFSK…KGPP) and 431–476 (WDPS…PELQ). Residues 509 to 529 (LASFLFLYCACMSPVITFGGL) form a helical membrane-spanning segment. Topologically, residues 530–537 (LGEATEGR) are extracellular. A helical transmembrane segment spans residues 538–558 (ISAIESLFGASMTGIAYSLFG). Residues 559–561 (GQP) lie on the Cytoplasmic side of the membrane. A helical transmembrane segment spans residues 562–582 (LTILGSTGPVLVFEKILFKFC). The Extracellular segment spans residues 583–595 (KEYGLSYLSLRAS). A helical membrane pass occupies residues 596-616 (IGLWTATLCIILVATDASSLV). At 617–625 (CYITRFTEE) the chain is on the cytoplasmic side. A helical transmembrane segment spans residues 626-646 (AFASLICIIFIYEALEKLFEL). The Extracellular segment spans residues 647–719 (SESYPINMHN…VGRACGHGHP (73 aa)). N-linked (GlcNAc...) asparagine glycans are attached at residues Asn676, Asn686, and Asn696. A helical membrane pass occupies residues 720-740 (YVPDVLFWSVILFFSTVTMSA). The Cytoplasmic portion of the chain corresponds to 741–761 (TLKQFKTSRYFPTKVRSIVSD). The chain crosses the membrane as a helical span at residues 762–782 (FAVFLTILCMVLIDYAIGIPS). Over 783–808 (PKLQVPSVFKPTRDDRGWFVTPLGPN) the chain is Extracellular. The helical transmembrane segment at 809–829 (PWWTIIAAIIPALLCTILIFM) threads the bilayer. Residues 830–854 (DQQITAVIINRKEHKLKKGCGYHLD) are Cytoplasmic-facing. The helical transmembrane segment at 855 to 875 (LLMVAVMLGVCSIMGLPWFVA) threads the bilayer. Residues 876–911 (ATVLSITHVNSLKLESECSAPGEQPKFLGIREQRVT) are Extracellular-facing. A helical membrane pass occupies residues 912 to 932 (GLMIFILMGSSVFMTSILKFI). The Cytoplasmic segment spans residues 933–934 (PM). Residues 935-955 (PVLYGVFLYMGASSLKGIQLF) form a helical membrane-spanning segment. Over 956–997 (DRIKLFWMPAKHQPDFIYLRHVPLRKVHLFTVIQMSCLGLLW) the chain is Extracellular. The chain crosses the membrane as a helical span at residues 998–1018 (IIKVSRAAIVFPMMVLALVFV). Over 1019–1117 (RKLMDFLFTK…SRFPSKSSPS (99 aa)) the chain is Cytoplasmic. Residues Ser1056 and Ser1084 each carry the phosphoserine modification.

Belongs to the anion exchanger (TC 2.A.31) family. N-glycosylated. In the brain, detected in cerebral cortex, subcortex, cerebellum, hippocampus and medulla (at protein level). Expressed in neurons but not in astrocytes (at protein level). Isoforms starting with Met-Glu-Ile-Lys are found predominantly in the brain with lower levels in the eye while isoforms starting with Met-Cys-Asp-Leu are most abundant in the kidney with lower levels in the duodenum, jejunum and ileum (at protein level). In the kidney, isoforms starting with Met-Cys-Asp-Leu are primarily expressed in the cortex, the outer stripe of the outer medulla and the inner stripe of the outer medulla (ISOM) but are not detectable in the inner medulla (IM) while isoforms starting with Met-Glu-Ile-Lys are predominantly expressed in the ISOM and IM. Expressed in the brain, in the hippocampus as well as in dentate gyrus, cortical layers, cerebellum, olfactory bulb and in the epithelial cells of the choroid plexus. Detected in pituitary, testis, kidney and ileum. Detected also in spleen and lung. In terms of tissue distribution, mainly expressed in the jejenum (at protein level).

The protein resides in the basolateral cell membrane. Its subcellular location is the apical cell membrane. It is found in the cell projection. The protein localises to the dendrite. It localises to the axon. The protein resides in the perikaryon. Its subcellular location is the presynapse. It is found in the postsynapse. The enzyme catalyses 2 hydrogencarbonate(out) + chloride(in) + Na(+)(out) = 2 hydrogencarbonate(in) + chloride(out) + Na(+)(in). Its function is as follows. Sodium/bicarbonate cotransporter which plays an important role in regulating intracellular pH. Has been shown to act as a sodium/bicarbonate cotransporter in exchange for intracellular chloride. Has also been shown to act as a sodium/biocarbonate cotransporter which does not couple net influx of bicarbonate to net efflux of chloride, with the observed chloride efflux being due to chloride self-exchange. Controls neuronal pH and may contribute to the secretion of cerebrospinal fluid. Acting on presynaptic intracellular pH, it promotes GABA release, reduces the excitability of CA1 pyramidal neurons, and modulates short-term synaptic plasticity. Required in retinal cells to maintain normal pH which is necessary for normal vision. In the kidney, likely to mediate bicarbonate reclamation in the apical membrane of the proximal tubules. In terms of biological role, sodium/bicarbonate cotransporter which mediates cotransport of sodium and bicarbonate in association with an efflux of intracellular chloride and is involved in NaCl absorption in the small intestine. This Rattus norvegicus (Rat) protein is Sodium-driven chloride bicarbonate exchanger.